The following is a 523-amino-acid chain: REST corepressor 2 (523 aa).

Residues 1–43 (MPSVMEKPSAGSGILSRSRAKTAPNGGQPHSEDDSSEEEHSHD) are disordered. The segment covering 30–43 (HSEDDSSEEEHSHD) has biased composition (basic and acidic residues). 4 positions are modified to phosphoserine: Ser-31, Ser-35, Ser-36, and Ser-63. In terms of domain architecture, ELM2 spans 44–129 (SMIRVGTNYQ…KSLADLANFT (86 aa)). Residue Lys-88 forms a Glycyl lysine isopeptide (Lys-Gly) (interchain with G-Cter in SUMO2) linkage. An SANT 1 domain is found at 130 to 181 (PFPDEWTVEDKVLFEQAFGFHGKCFQRIQQMLPDKVIPSLVKYYYSWKKTRS). The tract at residues 185 to 244 (VMDRQARRLGGRKDKEDSDELEEGRGAVSEGEPDTGDPKREPLPSRPLNARPGPGKKEVQ) is disordered. Phosphoserine is present on Ser-202. Residues 283-314 (TLRGLDSQLISLKRQVQSMKQTNSSLRQALEG) adopt a coiled-coil conformation. The region spanning 327–378 (KFNSRWTTDEQLLAVQAIRRYGKDFGAIAEVIGNKTLTQVKTFFVSYRRRFN) is the SANT 2 domain. Positions 387–523 (EAEQDGAPAA…APLEPPAPSL (137 aa)) are disordered. Pro residues predominate over residues 432–459 (SVPPAPPPPPPPTSLSQPPPLLRPPLPT). Residues 460–482 (APTLLRQPPPLQQGRFLQPRLAP) are compositionally biased toward low complexity. Arg-479 carries the post-translational modification Asymmetric dimethylarginine. Residues 504–523 (GPQPPPTLVGAPLEPPAPSL) are compositionally biased toward pro residues.

Belongs to the CoREST family. In terms of tissue distribution, predominantly, but not exclusively, expressed in neural tissue. Strongly expressed in neural domains of the developing brain of the developing mouse CNS.

It is found in the nucleus. In terms of biological role, may act as a component of a corepressor complex that represses transcription. The chain is REST corepressor 2 (Rcor2) from Mus musculus (Mouse).